Here is a 211-residue protein sequence, read N- to C-terminus: C-type lectin domain family 2 member L (211 aa).

A disordered region spans residues 1 to 53 (MEPAREPPARARPPPPAARPAPAAPRPRSPAEAEARGPEGLLRRSGSGYEGST). Positions 10 to 28 (RARPPPPAARPAPAAPRPR) are enriched in pro residues. At Ser-29 the chain carries Phosphoserine. The helical transmembrane segment at 66-86 (LLLGAIAVLLFAILVVMSILA) threads the bilayer. Positions 104–206 (YGRKCYYFSE…CLTTRPWVCS (103 aa)) constitute a C-type lectin domain. Disulfide bonds link Cys-125–Cys-205 and Cys-184–Cys-197.

The protein localises to the membrane. The sequence is that of C-type lectin domain family 2 member L (Clec2l) from Mus musculus (Mouse).